Here is a 254-residue protein sequence, read N- to C-terminus: N(G),N(G)-dimethylarginine dimethylaminohydrolase (254 aa).

Substrate contacts are provided by residues Leu18, Asp60, 65–66 (ED), Arg85, and Arg132. Catalysis depends on His162, which acts as the Proton donor. Residue His162 coordinates Zn(2+). Substrate is bound at residue Ile243. Cys249 contacts Zn(2+). Cys249 acts as the Nucleophile in catalysis.

The protein belongs to the DDAH family. Homodimer.

The enzyme catalyses N(omega),N(omega)-dimethyl-L-arginine + H2O = dimethylamine + L-citrulline. The catalysed reaction is N(omega)-methyl-L-arginine + H2O = L-citrulline + methylamine. Inhibited by zinc ions. Competitively inhibited by lysine. Hydrolyzes N(G),N(G)-dimethyl-L-arginine (ADMA) and N(G)-monomethyl-L-arginine (MMA). This is N(G),N(G)-dimethylarginine dimethylaminohydrolase from Pseudomonas aeruginosa (strain ATCC 15692 / DSM 22644 / CIP 104116 / JCM 14847 / LMG 12228 / 1C / PRS 101 / PAO1).